Here is a 292-residue protein sequence, read N- to C-terminus: Acetylglutamate kinase (292 aa).

Residues glycine 64 to glycine 65, arginine 86, and asparagine 190 contribute to the substrate site.

This sequence belongs to the acetylglutamate kinase family. ArgB subfamily.

It is found in the cytoplasm. The catalysed reaction is N-acetyl-L-glutamate + ATP = N-acetyl-L-glutamyl 5-phosphate + ADP. It participates in amino-acid biosynthesis; L-arginine biosynthesis; N(2)-acetyl-L-ornithine from L-glutamate: step 2/4. Catalyzes the ATP-dependent phosphorylation of N-acetyl-L-glutamate. The sequence is that of Acetylglutamate kinase from Trichlorobacter lovleyi (strain ATCC BAA-1151 / DSM 17278 / SZ) (Geobacter lovleyi).